Reading from the N-terminus, the 1214-residue chain is Protein argonaute-2 (1214 aa).

Positions 1 to 412 are disordered; sequence MGKKDKNKKG…GSIKRGTIGK (412 aa). Low complexity-rich tracts occupy residues 18–93 and 107–117; these read PQPQ…QQKS and KQQVQGWTKQG. Gly residues-rich tracts occupy residues 118–131, 141–154, 164–177, 187–200, 210–223, 233–246, and 256–269; these read QQGG…GQDG and QQGG…GQEG. Residues 270–282 are compositionally biased toward low complexity; that stretch reads GYQQRPPGQQQGG. Composition is skewed to gly residues over residues 302-315, 325-338, and 348-361; these read QQGG…GQEG. Positions 362–394 are enriched in low complexity; that stretch reads GYQQRPPGQQPNQTQSQGQYQSRGPPQQQQAAP. Residues 608-717 enclose the PAZ domain; the sequence is LERFSLKAKI…LPIELCSIEE (110 aa). Residues 681–686 are interaction with guide RNA; the sequence is YFHSRN. In terms of domain architecture, Piwi spans 885-1186; the sequence is LAIVIIPQFR…ARGRVYLTGT (302 aa). The a divalent metal cation site is built by D965 and D1037. Interaction with guide RNA regions lie at residues 1075–1076, 1119–1127, and 1156–1178; these read KR, HQAIQGTAK, and FPRC…VAAR. H1173 lines the a divalent metal cation pocket.

This sequence belongs to the argonaute family. Ago subfamily. As to quaternary structure, interacts with Fmr1, Dcr-1 and vig to form the RNA-induced silencing complex (RISC), a ribonucleoprotein (RNP) complex involved in translation regulation, other components of the complex are RpL5, RpL11 and Rm62. As part of the RISC complex, interacts with Tudor-SN. Interacts with Taf11. In terms of assembly, (Microbial infection) Interacts with cricket paralysis virus protein 1A; this interaction may block the RISC activity. Requires Mg(2+) as cofactor. It depends on Mn(2+) as a cofactor.

The protein resides in the nucleus. Its subcellular location is the cytoplasm. It is found in the cytoplasmic ribonucleoprotein granule. Essential for RNA interference (RNAi); double-stranded RNA induces potent and specific gene silencing. RNAi is mediated by the RNA-induced silencing complex (RISC), a sequence-specific, multicomponent nuclease that destroys or silences messenger RNAs homologous to the silencing trigger. This Drosophila melanogaster (Fruit fly) protein is Protein argonaute-2.